The primary structure comprises 264 residues: Thymidylate synthase (264 aa).

R21 contributes to the dUMP binding site. Position 51 (H51) interacts with (6R)-5,10-methylene-5,6,7,8-tetrahydrofolate. 126 to 127 is a dUMP binding site; it reads RR. C146 serves as the catalytic Nucleophile. DUMP-binding positions include 166-169, N177, and 207-209; these read RSAD and HIY. (6R)-5,10-methylene-5,6,7,8-tetrahydrofolate is bound at residue D169. Residue A263 participates in (6R)-5,10-methylene-5,6,7,8-tetrahydrofolate binding.

This sequence belongs to the thymidylate synthase family. Bacterial-type ThyA subfamily. In terms of assembly, homodimer.

Its subcellular location is the cytoplasm. It carries out the reaction dUMP + (6R)-5,10-methylene-5,6,7,8-tetrahydrofolate = 7,8-dihydrofolate + dTMP. It functions in the pathway pyrimidine metabolism; dTTP biosynthesis. Catalyzes the reductive methylation of 2'-deoxyuridine-5'-monophosphate (dUMP) to 2'-deoxythymidine-5'-monophosphate (dTMP) while utilizing 5,10-methylenetetrahydrofolate (mTHF) as the methyl donor and reductant in the reaction, yielding dihydrofolate (DHF) as a by-product. This enzymatic reaction provides an intracellular de novo source of dTMP, an essential precursor for DNA biosynthesis. This chain is Thymidylate synthase, found in Brucella ovis (strain ATCC 25840 / 63/290 / NCTC 10512).